A 129-amino-acid chain; its full sequence is Protachykinin-1 (129 aa).

The N-terminal stretch at 1 to 19 (MKILVALAVFFLVSTQLFA) is a signal peptide. A propeptide spanning residues 20–56 (EEIGANDDLNYWSDWYDSDQIKEELPEPFEHLLQRIA) is cleaved from the precursor. Met68 and Met107 each carry methionine amide.

The protein belongs to the tachykinin family. In terms of processing, the substance P form is cleaved at Pro-59 by the prolyl endopeptidase FAP (seprase) activity (in vitro). Substance P is also cleaved and degraded by Angiotensin-converting enzyme (ACE) and neprilysin (MME).

Its subcellular location is the secreted. Functionally, tachykinins are active peptides which excite neurons, evoke behavioral responses, are potent vasodilators and secretagogues, and contract (directly or indirectly) many smooth muscles. The protein is Protachykinin-1 (TAC1) of Homo sapiens (Human).